Reading from the N-terminus, the 423-residue chain is Histidine--tRNA ligase 2 (423 aa).

Belongs to the class-II aminoacyl-tRNA synthetase family. Homodimer.

It localises to the cytoplasm. The enzyme catalyses tRNA(His) + L-histidine + ATP = L-histidyl-tRNA(His) + AMP + diphosphate + H(+). The sequence is that of Histidine--tRNA ligase 2 from Bacillus cereus (strain ATCC 10987 / NRS 248).